We begin with the raw amino-acid sequence, 967 residues long: Sarcosine oxidase subunit alpha (967 aa).

NAD(+)-binding residues include Ala-141, Asp-160, Glu-161, Arg-162, Ser-168, Val-207, Ala-420, and Thr-427. Positions 694 and 786 each coordinate (6R)-5,10-methylene-5,6,7,8-tetrahydrofolate.

The protein belongs to the GcvT family. Heterotetramer composed of subunits alpha (SoxA), beta (SoxB), gamma (SoxG) and delta (SoxD). NAD(+) is required as a cofactor.

Its subcellular location is the cytoplasm. It carries out the reaction sarcosine + (6S)-5,6,7,8-tetrahydrofolate + O2 = (6R)-5,10-methylene-5,6,7,8-tetrahydrofolate + glycine + H2O2. The enzyme catalyses sarcosine + O2 + H2O = formaldehyde + glycine + H2O2. Its function is as follows. In the presence of tetrahydrofolate, catalyzes the oxidative demethylation of sarcosine to yield glycine, 5,10-methylenetetrahydrofolate and hydrogen peroxide. In the absence of tetrahydrofolate, catalyzes the oxidative demethylation of sarcosine to yield glycine, formaldehyde and hydrogen peroxide. The sequence is that of Sarcosine oxidase subunit alpha from Corynebacterium sp. (strain P-1).